We begin with the raw amino-acid sequence, 165 residues long: NADPH-dependent 7-cyano-7-deazaguanine reductase (165 aa).

Cysteine 56 acts as the Thioimide intermediate in catalysis. Aspartate 63 acts as the Proton donor in catalysis. Substrate is bound by residues 78 to 80 and 97 to 98; these read VES and HE.

Belongs to the GTP cyclohydrolase I family. QueF type 1 subfamily.

The protein resides in the cytoplasm. The enzyme catalyses 7-aminomethyl-7-carbaguanine + 2 NADP(+) = 7-cyano-7-deazaguanine + 2 NADPH + 3 H(+). The protein operates within tRNA modification; tRNA-queuosine biosynthesis. In terms of biological role, catalyzes the NADPH-dependent reduction of 7-cyano-7-deazaguanine (preQ0) to 7-aminomethyl-7-deazaguanine (preQ1). This chain is NADPH-dependent 7-cyano-7-deazaguanine reductase, found in Geobacillus thermodenitrificans (strain NG80-2).